We begin with the raw amino-acid sequence, 89 residues long: Luqin-like RYamide peptides lury-1 (89 aa).

An N-terminal signal peptide occupies residues 1 to 19 (MLTRVPVLILAVIVMLALC). Positions 20 to 26 (QEPEKPE) are excised as a propeptide. A tyrosine amide mark is found at Tyr35 and Tyr43. The propeptide occupies 47–89 (SGNLMESSQNSLTEESSDVVCQLIDGKYICLPVDAVRFRPFFL).

Expressed in the M1 and M2 pharyngeal neurons from where the LURY-1-1 and LURY-1-2 peptides are secreted.

The protein resides in the secreted. In terms of biological role, acts as a ligand for the npr-22 receptor and controls food-related processes including feeding, lifespan, egg-laying and roaming behavior. Secreted in the presence of food, leading to reduced feeding and roaming behavior and increased egg laying and lifespan. Activity may be latent under normal conditions but induced under conditions that cause hyperactivation of the pharynx such as abrupt refeeding after starvation. The polypeptide is Luqin-like RYamide peptides lury-1 (Caenorhabditis elegans).